A 149-amino-acid chain; its full sequence is D-aminoacyl-tRNA deacylase (149 aa).

The Gly-cisPro motif, important for rejection of L-amino acids signature appears at 137–138; sequence GP.

The protein belongs to the DTD family. As to quaternary structure, homodimer.

It localises to the cytoplasm. The enzyme catalyses glycyl-tRNA(Ala) + H2O = tRNA(Ala) + glycine + H(+). It carries out the reaction a D-aminoacyl-tRNA + H2O = a tRNA + a D-alpha-amino acid + H(+). An aminoacyl-tRNA editing enzyme that deacylates mischarged D-aminoacyl-tRNAs. Also deacylates mischarged glycyl-tRNA(Ala), protecting cells against glycine mischarging by AlaRS. Acts via tRNA-based rather than protein-based catalysis; rejects L-amino acids rather than detecting D-amino acids in the active site. By recycling D-aminoacyl-tRNA to D-amino acids and free tRNA molecules, this enzyme counteracts the toxicity associated with the formation of D-aminoacyl-tRNA entities in vivo and helps enforce protein L-homochirality. This chain is D-aminoacyl-tRNA deacylase, found in Clostridium novyi (strain NT).